The sequence spans 431 residues: Enolase (431 aa).

Q168 serves as a coordination point for (2R)-2-phosphoglycerate. The active-site Proton donor is the E210. Residues D247, E291, and D318 each coordinate Mg(2+). (2R)-2-phosphoglycerate is bound by residues K343, R372, S373, and K394. Residue K343 is the Proton acceptor of the active site.

It belongs to the enolase family. As to quaternary structure, component of the RNA degradosome, a multiprotein complex involved in RNA processing and mRNA degradation. It depends on Mg(2+) as a cofactor.

It localises to the cytoplasm. The protein localises to the secreted. It is found in the cell surface. It catalyses the reaction (2R)-2-phosphoglycerate = phosphoenolpyruvate + H2O. It participates in carbohydrate degradation; glycolysis; pyruvate from D-glyceraldehyde 3-phosphate: step 4/5. Catalyzes the reversible conversion of 2-phosphoglycerate (2-PG) into phosphoenolpyruvate (PEP). It is essential for the degradation of carbohydrates via glycolysis. The chain is Enolase from Acinetobacter baumannii (strain SDF).